Reading from the N-terminus, the 55-residue chain is Large ribosomal subunit protein bL33 (55 aa).

Belongs to the bacterial ribosomal protein bL33 family.

In Methylobacterium nodulans (strain LMG 21967 / CNCM I-2342 / ORS 2060), this protein is Large ribosomal subunit protein bL33.